The primary structure comprises 240 residues: Uridylate kinase (240 aa).

Lys-13–Gly-16 contacts ATP. An involved in allosteric activation by GTP region spans residues Gly-21–Gly-26. UMP is bound at residue Gly-55. The ATP site is built by Gly-56 and Arg-60. Residues Asp-75 and Thr-136–Thr-143 contribute to the UMP site. ATP contacts are provided by Thr-163, Gln-164, Tyr-169, and Asp-172.

It belongs to the UMP kinase family. Homohexamer.

The protein localises to the cytoplasm. The catalysed reaction is UMP + ATP = UDP + ADP. It participates in pyrimidine metabolism; CTP biosynthesis via de novo pathway; UDP from UMP (UMPK route): step 1/1. Allosterically activated by GTP. Inhibited by UTP. In terms of biological role, catalyzes the reversible phosphorylation of UMP to UDP. The sequence is that of Uridylate kinase from Sinorhizobium medicae (strain WSM419) (Ensifer medicae).